Reading from the N-terminus, the 420-residue chain is Tyrosine--tRNA ligase (420 aa).

Tyr-33 provides a ligand contact to L-tyrosine. The 'HIGH' region motif lies at 38 to 47 (PTGPSLHAGH). L-tyrosine-binding residues include Tyr-167 and Gln-171. The short motif at 227–231 (KFGKS) is the 'KMSKS' region element. Lys-230 lines the ATP pocket. The S4 RNA-binding domain occupies 352–418 (RTIIDLLVAS…GKKNFAGVQI (67 aa)).

Belongs to the class-I aminoacyl-tRNA synthetase family. TyrS type 1 subfamily. As to quaternary structure, homodimer.

It localises to the cytoplasm. The catalysed reaction is tRNA(Tyr) + L-tyrosine + ATP = L-tyrosyl-tRNA(Tyr) + AMP + diphosphate + H(+). Its function is as follows. Catalyzes the attachment of tyrosine to tRNA(Tyr) in a two-step reaction: tyrosine is first activated by ATP to form Tyr-AMP and then transferred to the acceptor end of tRNA(Tyr). The polypeptide is Tyrosine--tRNA ligase (Corynebacterium glutamicum (strain ATCC 13032 / DSM 20300 / JCM 1318 / BCRC 11384 / CCUG 27702 / LMG 3730 / NBRC 12168 / NCIMB 10025 / NRRL B-2784 / 534)).